The chain runs to 434 residues: D-amino acid dehydrogenase (434 aa).

3–17 (VIILGGGVIGVTSAW) is a binding site for FAD.

Belongs to the DadA oxidoreductase family. FAD serves as cofactor.

It carries out the reaction a D-alpha-amino acid + A + H2O = a 2-oxocarboxylate + AH2 + NH4(+). The protein operates within amino-acid degradation; D-alanine degradation; NH(3) and pyruvate from D-alanine: step 1/1. Functionally, oxidative deamination of D-amino acids. In Proteus mirabilis (strain HI4320), this protein is D-amino acid dehydrogenase.